Consider the following 261-residue polypeptide: Phosphonates import ATP-binding protein PhnC (261 aa).

In terms of domain architecture, ABC transporter spans 9–253 (IQLKDVSKIY…VFDDIYNGGN (245 aa)). Residue 42-49 (GLSGAGKS) participates in ATP binding.

It belongs to the ABC transporter superfamily. Phosphonates importer (TC 3.A.1.9.1) family. The complex is composed of two ATP-binding proteins (PhnC), two transmembrane proteins (PhnE) and a solute-binding protein (PhnD).

It is found in the cell membrane. It catalyses the reaction phosphonate(out) + ATP + H2O = phosphonate(in) + ADP + phosphate + H(+). Functionally, part of the ABC transporter complex PhnCDE involved in phosphonates import. Responsible for energy coupling to the transport system. The polypeptide is Phosphonates import ATP-binding protein PhnC (Lactobacillus gasseri (strain ATCC 33323 / DSM 20243 / BCRC 14619 / CIP 102991 / JCM 1131 / KCTC 3163 / NCIMB 11718 / NCTC 13722 / AM63)).